Here is an 87-residue protein sequence, read N- to C-terminus: Large ribosomal subunit protein bL31B (87 aa).

It belongs to the bacterial ribosomal protein bL31 family. Type B subfamily. As to quaternary structure, part of the 50S ribosomal subunit.

In Corynebacterium kroppenstedtii (strain DSM 44385 / JCM 11950 / CIP 105744 / CCUG 35717), this protein is Large ribosomal subunit protein bL31B.